The chain runs to 122 residues: Large ribosomal subunit protein uL14 (122 aa).

The protein belongs to the universal ribosomal protein uL14 family. As to quaternary structure, part of the 50S ribosomal subunit. Forms a cluster with proteins L3 and L19. In the 70S ribosome, L14 and L19 interact and together make contacts with the 16S rRNA in bridges B5 and B8.

In terms of biological role, binds to 23S rRNA. Forms part of two intersubunit bridges in the 70S ribosome. This chain is Large ribosomal subunit protein uL14, found in Listeria monocytogenes serotype 4b (strain CLIP80459).